Consider the following 476-residue polypeptide: Adenosylhomocysteinase (476 aa).

Thr62, Asp141, and Glu201 together coordinate substrate. An NAD(+)-binding site is contributed by 202-204 (TTT). The substrate site is built by Lys231 and Asp235. Residues Asn236, 265 to 270 (GYGDVG), Glu288, Asn323, 344 to 346 (IGH), and Asn389 each bind NAD(+).

It belongs to the adenosylhomocysteinase family. NAD(+) is required as a cofactor.

It localises to the cytoplasm. The catalysed reaction is S-adenosyl-L-homocysteine + H2O = L-homocysteine + adenosine. It functions in the pathway amino-acid biosynthesis; L-homocysteine biosynthesis; L-homocysteine from S-adenosyl-L-homocysteine: step 1/1. Functionally, may play a key role in the regulation of the intracellular concentration of adenosylhomocysteine. The sequence is that of Adenosylhomocysteinase from Delftia acidovorans (strain DSM 14801 / SPH-1).